The primary structure comprises 464 residues: Vitamin D3 hydroxylase-associated protein (464 aa).

Active-site charge relay system residues include Lys-150 and Ser-225. The active-site Acyl-ester intermediate is Ser-249.

It belongs to the amidase family. Kidney.

The protein localises to the mitochondrion inner membrane. Functionally, may have a vitamin D3 hydroxylase regulatory function. The sequence is that of Vitamin D3 hydroxylase-associated protein from Gallus gallus (Chicken).